The chain runs to 622 residues: WD repeat-containing protein 70 (622 aa).

The segment covering 37 to 55 (TAVERSKKTLEAREKEEQI) has biased composition (basic and acidic residues). Residues 37–141 (TAVERSKKTL…DNPVKGIPDS (105 aa)) form a disordered region. A compositionally biased stretch (low complexity) spans 67–84 (SSSRQKNTDTSSSSSGSE). Acidic residues predominate over residues 120–132 (SDDEDEEQHEDDD). WD repeat units follow at residues 148–187 (HGTKTVSALGLDPSGARLVTGGFDYDVRFWDFAGMDASLQ), 195–236 (CECH…ECVK), 249–289 (GHTA…KHKG), 298–337 (GKRVIPTCCTYSRDGKFIAAGCQDGSIQIWDRNMSVHTKF), 344–383 (TPGTDTSCVTFSYAGNILATRGGDDTLKTWDIRKFKNPLN), 389–434 (ANYF…KVYE), and 437–476 (VTEASVVRCLWHPKLNQIMVGTGNGLAKVYYDPNRSQRGA). The span at 508-533 (REPRQRSTRKQLEKDRLDPVKSHKPE) shows a compositional bias: basic and acidic residues. Disordered regions lie at residues 508–549 (REPR…GTHG) and 602–622 (AEVESDEEETDNEPEWKKRKI). The span at 539 to 549 (PGRGGRVGTHG) shows a compositional bias: gly residues. The segment covering 604-614 (VESDEEETDNE) has biased composition (acidic residues).

This sequence belongs to the WD repeat GAD-1 family.

The protein is WD repeat-containing protein 70 (wdr70) of Xenopus tropicalis (Western clawed frog).